A 220-amino-acid polypeptide reads, in one-letter code: DNA-directed RNA polymerase subunit alpha (220 aa).

The protein belongs to the RNA polymerase alpha chain family. In plastids the minimal PEP RNA polymerase catalytic core is composed of four subunits: alpha, beta, beta', and beta''. When a (nuclear-encoded) sigma factor is associated with the core the holoenzyme is formed, which can initiate transcription.

The protein resides in the plastid. The enzyme catalyses RNA(n) + a ribonucleoside 5'-triphosphate = RNA(n+1) + diphosphate. In terms of biological role, DNA-dependent RNA polymerase catalyzes the transcription of DNA into RNA using the four ribonucleoside triphosphates as substrates. This Euglena longa (Euglenophycean alga) protein is DNA-directed RNA polymerase subunit alpha (rpoA).